The chain runs to 433 residues: Steroid hormone receptor ERR2 (433 aa).

The segment at 1–41 is disordered; it reads MSSEDRHLGSSCGSFIKTEPSSPSSGIDALSHHSPSGSSDA. Residues 32–41 show a composition bias toward low complexity; that stretch reads HHSPSGSSDA. The tract at residues 93–211 is interaction with NANOG; that stretch reads YMLNAIPKRL…SPPAKKPLTK (119 aa). Positions 100–186 form a DNA-binding region, nuclear receptor; it reads KRLCLVCGDI…RVRGGRQKYK (87 aa). 2 consecutive NR C4-type zinc fingers follow at residues 103-123 and 139-163; these read CLVCGDIASGYHYGVASCEAC and CPATNECEITKRRRKSCQACRFMKC. The tract at residues 203–433 is essential for ESRRB transcriptional activity and interaction with NCOA3; sequence PPAKKPLTKI…LFLEMLEAKV (231 aa). The NR LBD domain occupies 208–432; it reads PLTKIVSYLL…KLFLEMLEAK (225 aa).

The protein belongs to the nuclear hormone receptor family. NR3 subfamily. In terms of assembly, binds DNA as a monomer. Interacts with NR0B1; represses ESRRB activity at the GATA6 promoter. Interacts with NANOG; reciprocally modulates their transcriptional activities and activates POU5F1 expression. Interacts with NCOA3; mediates the interaction between ESRRB and RNA polymerase II complexes and allows NCOA3 corecruitment to ESRRB, KLF4, NANOG, and SOX2 enhancer regions to trigger ESRRB-dependent gene activation involved in self-renewal and pluripotency. Interacts with KDM1A; co-occupes the core set of ESRRB targets including ELF5 and EOMES. Interacts with the multiprotein complex Integrator, at least composed of INTS1, INTS2, INTS3, INTS4, INTS5, INTS6, INTS7, INTS8, INTS9/RC74, INTS10, INTS11/CPSF3L and INTS12; ESRRB is probably not a core component of the integrator complex and associates to integrator via its interaction with INTS1 and INTS9; attracts the transcriptional machinery. Interacts with JARID2. Interacts with POU5F1; recruits ESRRB near the POU5F1-SOX2 element in the NANOG proximal promoter leading to activation of NANOG expression; the interaction is DNA independent. In terms of processing, acetylated by PCAF/KAT2 (in vitro).

The protein localises to the nucleus. It localises to the cytoplasm. It is found in the chromosome. In terms of biological role, transcription factor that binds a canonical ESRRB recognition (ERRE) sequence 5'TCAAGGTCA-3' localized on promoter and enhancer of targets genes regulating their expression or their transcription activity. Plays a role, in a LIF independent manner, in maintainance of self-renewal and pluripotency of embryonic and trophoblast stem cells through different signaling pathways including FGF signaling pathway and Wnt signaling pathways. Involved in morula development (2-16 cells embryos) by acting as a regulator at the 8-cell stage. Upon FGF signaling pathway activation, interacts with KDM1A by directly binding to enhancer site of ELF5 and EOMES and activating their transcription leading to self-renewal of trophoblast stem cells. Also regulates expression of multiple rod-specific genes and is required for survival of this cell type. Plays a role as transcription factor activator of GATA6, NR0B1, POU5F1 and PERM1. Plays a role as transcription factor repressor of NFE2L2 transcriptional activity and ESR1 transcriptional activity. During mitosis remains bound to a subset of interphase target genes, including pluripotency regulators, through the canonical ESRRB recognition (ERRE) sequence, leading to their transcriptional activation in early G1 phase. Can coassemble on structured DNA elements with other transcription factors like SOX2, POU5F1, KDM1A and NCOA3 to trigger ESRRB-dependent gene activation. This mechanism, in the case of SOX2 corecruitment prevents the embryonic stem cells (ESCs) to epiblast stem cells (EpiSC) transition through positive regulation of NR0B1 that inhibits the EpiSC transcriptional program. Also plays a role inner ear development by controlling expression of ion channels and transporters and in early placentation. This is Steroid hormone receptor ERR2 from Rattus norvegicus (Rat).